The following is a 706-amino-acid chain: Polyribonucleotide nucleotidyltransferase (706 aa).

Mg(2+) is bound by residues Asp-486 and Asp-492. The region spanning Pro-553–Ile-612 is the KH domain. The S1 motif domain occupies Gly-622–Lys-690.

It belongs to the polyribonucleotide nucleotidyltransferase family. As to quaternary structure, component of the RNA degradosome, which is a multiprotein complex involved in RNA processing and mRNA degradation. Requires Mg(2+) as cofactor.

The protein resides in the cytoplasm. The catalysed reaction is RNA(n+1) + phosphate = RNA(n) + a ribonucleoside 5'-diphosphate. Involved in mRNA degradation. Catalyzes the phosphorolysis of single-stranded polyribonucleotides processively in the 3'- to 5'-direction. The chain is Polyribonucleotide nucleotidyltransferase from Pectobacterium atrosepticum (strain SCRI 1043 / ATCC BAA-672) (Erwinia carotovora subsp. atroseptica).